We begin with the raw amino-acid sequence, 128 residues long: Large ribosomal subunit protein bL12 (128 aa).

The tract at residues 97 to 128 (GAPSTLKEGVSKEDAEEAKKQLTEAGATVEVK) is disordered. Basic and acidic residues predominate over residues 105-118 (GVSKEDAEEAKKQL).

It belongs to the bacterial ribosomal protein bL12 family. In terms of assembly, homodimer. Part of the ribosomal stalk of the 50S ribosomal subunit. Forms a multimeric L10(L12)X complex, where L10 forms an elongated spine to which 2 to 4 L12 dimers bind in a sequential fashion. Binds GTP-bound translation factors.

In terms of biological role, forms part of the ribosomal stalk which helps the ribosome interact with GTP-bound translation factors. Is thus essential for accurate translation. The chain is Large ribosomal subunit protein bL12 from Lawsonia intracellularis (strain PHE/MN1-00).